The following is a 460-amino-acid chain: 3-isopropylmalate dehydratase large subunit (460 aa).

The [4Fe-4S] cluster site is built by Cys-338, Cys-398, and Cys-401.

Belongs to the aconitase/IPM isomerase family. LeuC type 1 subfamily. Heterodimer of LeuC and LeuD. [4Fe-4S] cluster serves as cofactor.

The catalysed reaction is (2R,3S)-3-isopropylmalate = (2S)-2-isopropylmalate. It participates in amino-acid biosynthesis; L-leucine biosynthesis; L-leucine from 3-methyl-2-oxobutanoate: step 2/4. Catalyzes the isomerization between 2-isopropylmalate and 3-isopropylmalate, via the formation of 2-isopropylmaleate. The polypeptide is 3-isopropylmalate dehydratase large subunit (Streptococcus sanguinis (strain SK36)).